We begin with the raw amino-acid sequence, 339 residues long: Diguanylate cyclase VdcA (339 aa).

Positions Gln-206–Leu-339 constitute a GGDEF domain. Asp-214 is a binding site for Mg(2+). Positions 222 and 231 each coordinate substrate. Residue Glu-257 participates in Mg(2+) binding. Glu-257 acts as the Proton acceptor in catalysis.

The cofactor is Mg(2+).

The catalysed reaction is 2 GTP = 3',3'-c-di-GMP + 2 diphosphate. Its pathway is purine metabolism; 3',5'-cyclic di-GMP biosynthesis. Its function is as follows. Diguanylate cyclase (DGC) that catalyzes the synthesis of cyclic diguanylate (c-di-GMP) via the condensation of 2 GTP molecules. Is involved in the modulation of intracellular c-di-GMP levels. Cyclic-di-GMP is a second messenger which positively regulates biofilm formation and negatively regulates virulence in V.cholerae, and is proposed to play an important role in the transition from persistence in the environment to survival in the host. Overexpression of vdcA results in increased biofilm formation, and reduced motility and virulence. This chain is Diguanylate cyclase VdcA (vdcA), found in Vibrio cholerae serotype O1 (strain ATCC 39315 / El Tor Inaba N16961).